The sequence spans 388 residues: Transcription factor SOX-7 (388 aa).

Disordered stretches follow at residues 20 to 46 and 140 to 197; these read DAELSDGQSPPAVPRPPGDKGSESRIR and RDQN…VDTY. Basic and acidic residues-rich tracts occupy residues 36 to 45 and 146 to 164; these read PGDKGSESRI and PEKRSGSRGALGEKEDRGE. The HMG box DNA-binding region spans 45–113; the sequence is IRRPMNAFMV…QHMQDYPNYK (69 aa). In terms of domain architecture, Sox C-terminal spans 268 to 388; it reads VSMMSPVPGC…ATYYNSYSVS (121 aa).

Interacts with CTNNB1/beta-catenin; this interaction may lead to the proteasomal degradation of active CTNNB1 and thus inhibition of Wnt/beta-catenin-stimulated transcription. Widely expressed in adult and fetal tissues. Present both in mesenchymal and epithelial cells in some adult tissues, including colon. Tends to be down-regulated in prostate adenocarcinomas and colorectal tumors due to promoter hypermethylation.

It is found in the nucleus. Its subcellular location is the cytoplasm. In terms of biological role, binds to and activates the CDH5 promoter, hence plays a role in the transcriptional regulation of genes expressed in the hemogenic endothelium and blocks further differentiation into blood precursors. May be required for the survival of both hematopoietic and endothelial precursors during specification. Competes with GATA4 for binding and activation of the FGF3 promoter. Represses Wnt/beta-catenin-stimulated transcription, probably by targeting CTNNB1 to proteasomal degradation. Binds the DNA sequence 5'-AACAAT-3'. The protein is Transcription factor SOX-7 (SOX7) of Homo sapiens (Human).